A 337-amino-acid chain; its full sequence is Holliday junction branch migration complex subunit RuvB (337 aa).

A large ATPase domain (RuvB-L) region spans residues 1-179 (MTHQVSVLHQ…FSFSGRVSYY (179 aa)). ATP-binding positions include L18, R19, G60, K63, T64, S65, 126–128 (EDY), R169, Y179, and R216. Position 64 (T64) interacts with Mg(2+). Positions 180-250 (SDEDLATILK…VAEKALSMLL (71 aa)) are small ATPAse domain (RuvB-S). The tract at residues 253 to 337 (DWGLNEIDIK…DNLQILGEEK (85 aa)) is head domain (RuvB-H). The DNA site is built by K308 and R313.

Belongs to the RuvB family. As to quaternary structure, homohexamer. Forms an RuvA(8)-RuvB(12)-Holliday junction (HJ) complex. HJ DNA is sandwiched between 2 RuvA tetramers; dsDNA enters through RuvA and exits via RuvB. An RuvB hexamer assembles on each DNA strand where it exits the tetramer. Each RuvB hexamer is contacted by two RuvA subunits (via domain III) on 2 adjacent RuvB subunits; this complex drives branch migration. In the full resolvosome a probable DNA-RuvA(4)-RuvB(12)-RuvC(2) complex forms which resolves the HJ.

It localises to the cytoplasm. The enzyme catalyses ATP + H2O = ADP + phosphate + H(+). The RuvA-RuvB-RuvC complex processes Holliday junction (HJ) DNA during genetic recombination and DNA repair, while the RuvA-RuvB complex plays an important role in the rescue of blocked DNA replication forks via replication fork reversal (RFR). RuvA specifically binds to HJ cruciform DNA, conferring on it an open structure. The RuvB hexamer acts as an ATP-dependent pump, pulling dsDNA into and through the RuvAB complex. RuvB forms 2 homohexamers on either side of HJ DNA bound by 1 or 2 RuvA tetramers; 4 subunits per hexamer contact DNA at a time. Coordinated motions by a converter formed by DNA-disengaged RuvB subunits stimulates ATP hydrolysis and nucleotide exchange. Immobilization of the converter enables RuvB to convert the ATP-contained energy into a lever motion, pulling 2 nucleotides of DNA out of the RuvA tetramer per ATP hydrolyzed, thus driving DNA branch migration. The RuvB motors rotate together with the DNA substrate, which together with the progressing nucleotide cycle form the mechanistic basis for DNA recombination by continuous HJ branch migration. Branch migration allows RuvC to scan DNA until it finds its consensus sequence, where it cleaves and resolves cruciform DNA. In Chlamydia felis (strain Fe/C-56) (Chlamydophila felis), this protein is Holliday junction branch migration complex subunit RuvB.